The chain runs to 335 residues: Rho guanine nucleotide exchange factor 39 (335 aa).

The region spanning 22–197 (KRACTARELL…SETAQRVHTI (176 aa)) is the DH domain. A PH domain is found at 227-331 (WFLRQGWLLV…WYHSLTWAIS (105 aa)).

As to expression, strongly expressed in hepatocellular carcinoma (HCC) compared with their non-cancerous counterparts.

The protein localises to the cell membrane. Its function is as follows. Promotes cell proliferation. The polypeptide is Rho guanine nucleotide exchange factor 39 (ARHGEF39) (Homo sapiens (Human)).